Here is a 172-residue protein sequence, read N- to C-terminus: Caltractin (172 aa).

A disordered region spans residues 1 to 23 (MQKYGSKKIGATSATSSNKQKVQ). The span at 12–21 (TSATSSNKQK) shows a compositional bias: polar residues. EF-hand domains follow at residues 29 to 64 (EQRQEIKEAFDLFDMDGSGKIDAKELKVAMRALGFE), 65 to 99 (PKKEEIKKMISGIDNGSGKIDFNDFLQLMTAKMSE), 101 to 136 (DSHAEIMKAFRLFDEDDSGFITFANLKRVAKDLGEN), and 137 to 172 (MTDEELREMIEEADRSNQGQISKEDFLRIMKKTNLF). Positions 42, 44, 46, 48, and 53 each coordinate Ca(2+).

It belongs to the centrin family. In terms of assembly, monomer.

It is found in the cytoplasm. The protein localises to the cytoskeleton. It localises to the microtubule organizing center. The protein resides in the centrosome. In terms of biological role, plays a fundamental role in microtubule-organizing center structure and function. This chain is Caltractin (CTN), found in Naegleria gruberi (Amoeba).